Consider the following 231-residue polypeptide: Monothiol glutaredoxin-6 (231 aa).

Residues 1-29 form the signal peptide; the sequence is MIPSNKRNARILSITTLLLLLVFFVAQNA. Residues 116 to 219 form the Glutaredoxin domain; that stretch reads QKEYSLILDL…ESLQVWSDGK (104 aa). Cys136 serves as a coordination point for [2Fe-2S] cluster.

This sequence belongs to the glutaredoxin family. Monothiol subfamily.

The protein resides in the vacuole. The chain is Monothiol glutaredoxin-6 (GRX6) from Saccharomyces cerevisiae (strain ATCC 204508 / S288c) (Baker's yeast).